We begin with the raw amino-acid sequence, 216 residues long: Ribosomal RNA large subunit methyltransferase E (216 aa).

Positions 60, 62, 80, 96, and 121 each coordinate S-adenosyl-L-methionine. K161 serves as the catalytic Proton acceptor.

The protein belongs to the class I-like SAM-binding methyltransferase superfamily. RNA methyltransferase RlmE family.

It is found in the cytoplasm. The enzyme catalyses uridine(2552) in 23S rRNA + S-adenosyl-L-methionine = 2'-O-methyluridine(2552) in 23S rRNA + S-adenosyl-L-homocysteine + H(+). Its function is as follows. Specifically methylates the uridine in position 2552 of 23S rRNA at the 2'-O position of the ribose in the fully assembled 50S ribosomal subunit. In Pseudomonas syringae pv. syringae (strain B728a), this protein is Ribosomal RNA large subunit methyltransferase E.